The chain runs to 648 residues: ABC transporter G family member 14 (648 aa).

Residues 53–304 form the ABC transporter domain; the sequence is LKFEEVVYKV…FSSLGFSTSL (252 aa). Position 99–106 (99–106) interacts with ATP; that stretch reads GPSGSGKT. The N-linked (GlcNAc...) asparagine glycan is linked to Asn-346. The ABC transmembrane type-2 domain maps to 384–590; that stretch reads YQFTVLLQRG…CYKLLLGIQY (207 aa). The next 7 helical transmembrane spans lie at 405 to 425, 435 to 455, 485 to 505, 512 to 532, 543 to 562, 569 to 591, and 620 to 640; these read LRIFQVISVAFLGGLLWWHTP, LLFFFSVFWGFYPLYNAVFTF, LPLELALPTAFVFIIYWMGGL, FILSLLVVLYSVLVAQGLGLA, ATTLASVTTLVFLIAGGYYV, IVWLKYLSYSYYCYKLLLGIQYT, and LWIDVFVMGVMLVGYRLMAYM.

It belongs to the ABC transporter superfamily. ABCG family. Eye pigment precursor importer (TC 3.A.1.204) subfamily. In terms of assembly, forms heterodimers with ABCG11. As to expression, accumulates primarily in the pericycle and stelar cells of roots. Expressed in leaves, stems, flowers and siliques, and, at low levels, in roots. Accumulates in the phloem.

Its subcellular location is the cell membrane. Its function is as follows. Positive regulator of plant growth which acts as an efflux pump involved in the major root-to-shoot (acropetal) long-distance cytokinin (CK) transport via the xylem sap. Together with ABCG9 and ABCG11, required for vascular development by regulating lipid/sterol homeostasis. Involved in CK-dependent responses to oxidative stress such as hydrogen peroxide H(2)O(2). Functionally, (Microbial infection) Required for SNC1-mediated defense response against the virulent pathogen Pseudomonas syringae pv. tomato DC3000 by promoting the accumulation of trans-zeatin (tZ)-type cytokinins (CK) in the shoot. The sequence is that of ABC transporter G family member 14 from Arabidopsis thaliana (Mouse-ear cress).